Here is a 343-residue protein sequence, read N- to C-terminus: UDP-N-acetylglucosamine--N-acetylmuramyl-(pentapeptide) pyrophosphoryl-undecaprenol N-acetylglucosamine transferase (343 aa).

Residues 10–12 (TGG), Asn113, Ser174, and Gln275 each bind UDP-N-acetyl-alpha-D-glucosamine.

This sequence belongs to the glycosyltransferase 28 family. MurG subfamily.

It is found in the cell membrane. It catalyses the reaction di-trans,octa-cis-undecaprenyl diphospho-N-acetyl-alpha-D-muramoyl-L-alanyl-D-glutamyl-meso-2,6-diaminopimeloyl-D-alanyl-D-alanine + UDP-N-acetyl-alpha-D-glucosamine = di-trans,octa-cis-undecaprenyl diphospho-[N-acetyl-alpha-D-glucosaminyl-(1-&gt;4)]-N-acetyl-alpha-D-muramoyl-L-alanyl-D-glutamyl-meso-2,6-diaminopimeloyl-D-alanyl-D-alanine + UDP + H(+). It functions in the pathway cell wall biogenesis; peptidoglycan biosynthesis. Cell wall formation. Catalyzes the transfer of a GlcNAc subunit on undecaprenyl-pyrophosphoryl-MurNAc-pentapeptide (lipid intermediate I) to form undecaprenyl-pyrophosphoryl-MurNAc-(pentapeptide)GlcNAc (lipid intermediate II). The polypeptide is UDP-N-acetylglucosamine--N-acetylmuramyl-(pentapeptide) pyrophosphoryl-undecaprenol N-acetylglucosamine transferase (Wolbachia sp. subsp. Brugia malayi (strain TRS)).